A 105-amino-acid chain; its full sequence is Large ribosomal subunit protein bL21 (105 aa).

The protein belongs to the bacterial ribosomal protein bL21 family. Part of the 50S ribosomal subunit. Contacts protein L20.

This protein binds to 23S rRNA in the presence of protein L20. In Rhizobium rhizogenes (strain K84 / ATCC BAA-868) (Agrobacterium radiobacter), this protein is Large ribosomal subunit protein bL21.